We begin with the raw amino-acid sequence, 67 residues long: SPbeta prophage-derived uncharacterized protein YoqK (67 aa).

This Bacillus subtilis (strain 168) protein is SPbeta prophage-derived uncharacterized protein YoqK (yoqK).